A 154-amino-acid polypeptide reads, in one-letter code: Transcriptional regulator MraZ (154 aa).

SpoVT-AbrB domains follow at residues 6–53 and 83–126; these read NSEA…PENV and VEVI…SKEI.

The protein belongs to the MraZ family. In terms of assembly, forms oligomers.

It is found in the cytoplasm. The protein resides in the nucleoid. The polypeptide is Transcriptional regulator MraZ (Phocaeicola vulgatus (strain ATCC 8482 / DSM 1447 / JCM 5826 / CCUG 4940 / NBRC 14291 / NCTC 11154) (Bacteroides vulgatus)).